A 147-amino-acid polypeptide reads, in one-letter code: Probable flagellum biosynthesis repressor protein FlbT (147 aa).

Belongs to the FlbT family.

In terms of biological role, has a post-transcriptional repressor function in flagellum biogenesis. Associates with the 5'-UTR of fljK mRNA and promotes its degradation. This Mesorhizobium japonicum (strain LMG 29417 / CECT 9101 / MAFF 303099) (Mesorhizobium loti (strain MAFF 303099)) protein is Probable flagellum biosynthesis repressor protein FlbT.